The chain runs to 291 residues: Small ribosomal subunit protein uS2 (291 aa).

The interval 256–291 is disordered; it reads STTAPPNWEATGGDWATSTAPAEGWAGDAPAGETKW.

It belongs to the universal ribosomal protein uS2 family. In terms of assembly, component of the small ribosomal subunit. Mature ribosomes consist of a small (40S) and a large (60S) subunit. The 40S subunit contains about 33 different proteins and 1 molecule of RNA (18S). The 60S subunit contains about 49 different proteins and 3 molecules of RNA (25S, 5.8S and 5S). Interacts with RPS21.

The protein resides in the cytoplasm. Required for the assembly and/or stability of the 40S ribosomal subunit. Required for the processing of the 20S rRNA-precursor to mature 18S rRNA in a late step of the maturation of 40S ribosomal subunits. In Coccidioides immitis (strain RS) (Valley fever fungus), this protein is Small ribosomal subunit protein uS2.